Reading from the N-terminus, the 334-residue chain is MIIYILFSLLAAVIVHLVYKKQTGFKLKGKHIVVVGGSSGIGKELVYELLKENIASISVISRSLDKLRSVVDDCPSEVCTKSTPLNVGSLKSKIEIYSCDITNKIKVKETIAQIVSKNQGGKIDCLINCAGFAIPGYFIEQDEEIFEKTMQLDYFGSLYATKEVVPLMIENGGQGGHIVFVSSTCGLVGVPGYSTYCPSKFALRGLAETLRSELKPYKITFSVVYPPDTDTPGYQQENLTKPEETVAISGGGKAVSPLEVAKSIVSGIKNGDYHIAYDVPTKLCAVLSPGLTPFYFSFFDILLAPICRLVGIIAMNQNDAEVLKSWKKRNQLKK.

Residues 1–20 (MIIYILFSLLAAVIVHLVYK) form the signal peptide. NADPH-binding residues include glycine 36, serine 38, serine 39, glycine 40, arginine 62, lysine 66, aspartate 100, and isoleucine 101. Residues 36 to 40 (GGSSG) carry the GXSXG motif. Serine 182 functions as the Proton donor in the catalytic mechanism. The active-site Proton acceptor is the tyrosine 196. NADP(+) contacts are provided by tyrosine 196 and lysine 200. Lysine 200 serves as the catalytic Lowers pKa of active site Tyr.

Belongs to the short-chain dehydrogenases/reductases (SDR) family.

The protein resides in the endoplasmic reticulum. It catalyses the reaction sphinganine + NADP(+) = 3-oxosphinganine + NADPH + H(+). The protein operates within lipid metabolism; sphingolipid metabolism. In terms of biological role, catalyzes the reduction of 3'-oxosphinganine (3-ketodihydrosphingosine/KDS) to sphinganine (dihydrosphingosine/DHS), the second step of de novo sphingolipid biosynthesis. The chain is 3-ketodihydrosphingosine reductase (ksrA-1) from Dictyostelium discoideum (Social amoeba).